Here is a 582-residue protein sequence, read N- to C-terminus: BTB/POZ domain and ankyrin repeat-containing protein NPR1 (582 aa).

Positions 1-18 (MEPPTSHVTNAFSDSDSA) are enriched in polar residues. Positions 1–25 (MEPPTSHVTNAFSDSDSASVEEGGA) are disordered. One can recognise a BTB domain in the interval 55–140 (ADARIAVPGG…VLDYLYSGRV (86 aa)). Residues 147–161 (ACLCVDEDCAHVGCH) form a C2HC NPR-type zinc finger. 4 residues coordinate Zn(2+): cysteine 150, cysteine 155, histidine 157, and cysteine 160. ANK repeat units follow at residues 229 to 258 (RSNLDMITLEKSLPPDVIKQIIDARLSLGL), 269 to 299 (KHVRRIHRALDSDDVELVRMLLTEGQTNLDD), 301 to 328 (FALHYAVEHCDSKITTELLDLALADVNH), and 332 to 361 (RGYTVLHIAARRREPKIIVSLLTKGARPAD). The interval 391–526 (PSPKDRLCIE…VLDKIMDDET (136 aa)) is salicylic acid-binding core (SBC). Salicylate is bound at residue arginine 436. Residues 551 to 582 (QKAFHEDKEENDRSGLSSSSSSTSIGAIRPRR) are disordered. The segment covering 553–563 (AFHEDKEENDR) has biased composition (basic and acidic residues). Residues 564-574 (SGLSSSSSSTS) show a composition bias toward low complexity.

This sequence belongs to the plant 'ANKYRIN-BTB/POZ' family. 'NPR1-like' subfamily. As to quaternary structure, oligomer in an uninduced state; disulfide-linked. Forms activated monomer upon changes in cellular redox potential. Interacts with TGA2.1, TGA2.2, TGA2.3, LG2, TGAL1 and TGAL4. Interacts with NRR, RH1, RH2 and RH3.

The protein resides in the cytoplasm. The protein localises to the nucleus. Its subcellular location is the nuclear body. It functions in the pathway protein modification; protein ubiquitination. Functionally, salicylic acid (SA)-binding substrate-specific adapter of an E3 ubiquitin-protein ligase complex (CUL3-RBX1-BTB) which mediates the ubiquitination and subsequent proteasomal degradation of target proteins. Transcription cofactor that represses gene expression in the absence of salicylic acid (SA), when attached to negative cis-elements (W-box) with WRKY transcription factors, but stimulates gene expression upon activation by SA, when sumoylated and attached to positive cis-elements (as-1) with TGA transcription factors, thus confering immunity through a series of gene regulations ending in a significant increase in antimicrobial and defense genes expression. Key positive factor of disease resistance. Plays an essential role in benzothiadiazole (BTH)-induced resistance to the blast fungus disease caused by Magnaporthe oryzae. Involved in defense response against the bacterial blight disease caused by Xanthomonas oryzae pv. oryzae (Xoo). Over-expression of NPR1/NH1 confers disease resistance to Xoo, but also enhances herbivore susceptibility. Functions as a transcriptional coactivator of TGA2.1 and LG2 in vitro. Involved in defense response against herbivore. Plants silencing NPR1/NH1 have increased herbivore-induced trypsin proteinase inhibitors and volatiles, which reduces the performance of the striped stem borer (SSB) Chilo suppressalis. This is BTB/POZ domain and ankyrin repeat-containing protein NPR1 from Oryza sativa subsp. japonica (Rice).